The sequence spans 391 residues: Chorismate synthase (391 aa).

NADP(+) contacts are provided by arginine 39 and arginine 45. FMN-binding positions include 133 to 135 (RAS), 254 to 255 (QA), glycine 299, 314 to 318 (KPIAT), and arginine 340.

The protein belongs to the chorismate synthase family. As to quaternary structure, homotetramer. FMNH2 serves as cofactor.

The catalysed reaction is 5-O-(1-carboxyvinyl)-3-phosphoshikimate = chorismate + phosphate. It participates in metabolic intermediate biosynthesis; chorismate biosynthesis; chorismate from D-erythrose 4-phosphate and phosphoenolpyruvate: step 7/7. In terms of biological role, catalyzes the anti-1,4-elimination of the C-3 phosphate and the C-6 proR hydrogen from 5-enolpyruvylshikimate-3-phosphate (EPSP) to yield chorismate, which is the branch point compound that serves as the starting substrate for the three terminal pathways of aromatic amino acid biosynthesis. This reaction introduces a second double bond into the aromatic ring system. In Symbiobacterium thermophilum (strain DSM 24528 / JCM 14929 / IAM 14863 / T), this protein is Chorismate synthase.